The chain runs to 471 residues: 6-phosphogluconate dehydrogenase, decarboxylating (471 aa).

Residues 10 to 15, 33 to 35, 75 to 77, and Asn103 contribute to the NADP(+) site; these read GLAVMG, NRT, and VKA. Substrate-binding positions include Asn103 and 129-131; that span reads SGG. Lys183 acts as the Proton acceptor in catalysis. 186–187 lines the substrate pocket; it reads HN. Glu190 functions as the Proton donor in the catalytic mechanism. Substrate contacts are provided by Tyr191, Lys263, Arg290, Arg449, and His455.

The protein belongs to the 6-phosphogluconate dehydrogenase family. In terms of assembly, homodimer.

It carries out the reaction 6-phospho-D-gluconate + NADP(+) = D-ribulose 5-phosphate + CO2 + NADPH. It participates in carbohydrate degradation; pentose phosphate pathway; D-ribulose 5-phosphate from D-glucose 6-phosphate (oxidative stage): step 3/3. Its function is as follows. Catalyzes the oxidative decarboxylation of 6-phosphogluconate to ribulose 5-phosphate and CO(2), with concomitant reduction of NADP to NADPH. The polypeptide is 6-phosphogluconate dehydrogenase, decarboxylating (gnd) (Synechococcus elongatus (strain ATCC 33912 / PCC 7942 / FACHB-805) (Anacystis nidulans R2)).